Consider the following 116-residue polypeptide: Hydrogenase maturation factor HypA (116 aa).

His-2 is a binding site for Ni(2+). Cys-73, Cys-76, Cys-89, and Cys-92 together coordinate Zn(2+).

This sequence belongs to the HypA/HybF family.

Its function is as follows. Involved in the maturation of [NiFe] hydrogenases. Required for nickel insertion into the metal center of the hydrogenase. The polypeptide is Hydrogenase maturation factor HypA (Chlorobium limicola (strain DSM 245 / NBRC 103803 / 6330)).